Reading from the N-terminus, the 620-residue chain is Notoamide biosynthesis transcriptional activator notL' (620 aa).

The interval 1–26 is disordered; sequence MPPSSKSRRLPPAASDSAASDAQKRR. Positions 33–59 form a DNA-binding region, zn(2)-C6 fungal-type; that stretch reads CSACKARKLKCTGAPPCANCVKSRIEC. A disordered region spans residues 591–620; that stretch reads ETGAFFLDPDQPSGNSTPIKSETPEGTAIS.

The protein resides in the nucleus. In terms of biological role, transcription factor that probably regulates the expression of the gene cluster that mediates the biosynthesis of notoamide, a fungal indole alkaloid that belongs to a family of natural products containing a characteristic bicyclo[2.2.2]diazaoctane core. This chain is Notoamide biosynthesis transcriptional activator notL', found in Aspergillus versicolor.